Reading from the N-terminus, the 162-residue chain is Transcriptional repressor NrdR (162 aa).

Residues 3–34 fold into a zinc finger; it reads CPFCQFEGLKVTDSRDAMEMNAIRRRRECLNC. One can recognise an ATP-cone domain in the interval 48–138; that stretch reads VQVQKRDGTY…VYKRFKDLGE (91 aa).

Belongs to the NrdR family. It depends on Zn(2+) as a cofactor.

Its function is as follows. Negatively regulates transcription of bacterial ribonucleotide reductase nrd genes and operons by binding to NrdR-boxes. In Protochlamydia amoebophila (strain UWE25), this protein is Transcriptional repressor NrdR.